The primary structure comprises 488 residues: Phenylalanine--tRNA ligase alpha subunit (488 aa).

L-phenylalanine is bound by residues threonine 332, glutamine 371–aspartate 373, and phenylalanine 410. Glutamate 412 serves as a coordination point for Mg(2+). Phenylalanine 435 lines the L-phenylalanine pocket.

This sequence belongs to the class-II aminoacyl-tRNA synthetase family. Phe-tRNA synthetase alpha subunit type 2 subfamily. As to quaternary structure, tetramer of two alpha and two beta subunits. Mg(2+) is required as a cofactor.

It localises to the cytoplasm. It carries out the reaction tRNA(Phe) + L-phenylalanine + ATP = L-phenylalanyl-tRNA(Phe) + AMP + diphosphate + H(+). The polypeptide is Phenylalanine--tRNA ligase alpha subunit (Aeropyrum pernix (strain ATCC 700893 / DSM 11879 / JCM 9820 / NBRC 100138 / K1)).